A 301-amino-acid chain; its full sequence is MNWITNYVRPKINSMLGRREMPENLWIKDPSTGEMVFHKDLESNQFVIPSSGHHMRIKAKDRLRFFFDNGEYTTLEAPKVPVDPLKFRDEKKYIDRLKDYRTRTGMDDAIVNGLGTIDGLPIVATVQDFGFMGGSLGMGAGEAIIQGFEKAIELKRPLVLFAASGGARMQEGILSLMQLPRTTVAVEMLKEAGLPYIVVLTNPTTGGVTASYAMLGDIHIAEPGALIGFAGPRVIEQTIREKLPEGFQSADYLMEHGMVDMVVSRLELKDTIARLLKIMTRQPGNSDAPEHEKTEATDKAA.

Residues 25–294 (LWIKDPSTGE…NSDAPEHEKT (270 aa)) form the CoA carboxyltransferase N-terminal domain. The segment at 282–301 (QPGNSDAPEHEKTEATDKAA) is disordered. The span at 288-301 (APEHEKTEATDKAA) shows a compositional bias: basic and acidic residues.

Belongs to the AccD/PCCB family. As to quaternary structure, acetyl-CoA carboxylase is a heterohexamer composed of biotin carboxyl carrier protein (AccB), biotin carboxylase (AccC) and two subunits each of ACCase subunit alpha (AccA) and ACCase subunit beta (AccD).

The protein localises to the cytoplasm. The enzyme catalyses N(6)-carboxybiotinyl-L-lysyl-[protein] + acetyl-CoA = N(6)-biotinyl-L-lysyl-[protein] + malonyl-CoA. Its pathway is lipid metabolism; malonyl-CoA biosynthesis; malonyl-CoA from acetyl-CoA: step 1/1. Its function is as follows. Component of the acetyl coenzyme A carboxylase (ACC) complex. Biotin carboxylase (BC) catalyzes the carboxylation of biotin on its carrier protein (BCCP) and then the CO(2) group is transferred by the transcarboxylase to acetyl-CoA to form malonyl-CoA. In Brucella anthropi (strain ATCC 49188 / DSM 6882 / CCUG 24695 / JCM 21032 / LMG 3331 / NBRC 15819 / NCTC 12168 / Alc 37) (Ochrobactrum anthropi), this protein is Acetyl-coenzyme A carboxylase carboxyl transferase subunit beta.